The sequence spans 279 residues: MAMLSFEKKYRVRGGTLVGGDLFDFWVGPFYVGFFGVTTLFFSVLGTALIIWGASQGPTWNLWQISIAPPDLKYGLGVAPLMEGGLWQIITVCAIGAFVSWALREVEICRKLGMQYHVPIAFSFAILAYVTLVVIRPILMGAWGHGFPYGIFSHLDWVSNVGYQYLHFHYNPAHMLAITFFFTTTLAMSMHGGLILSAANPKKGEPMKTTDHEDTFFRDAVGYSIGSLGIHRLGLFLALSAAFWSAVCIVISGPFWTRGWPEWWGWWLNLPIWSQWPLK.

Helical transmembrane passes span 33–56 (GFFGVTTLFFSVLGTALIIWGASQ), 85–113 (GLWQIITVCAIGAFVSWALREVEICRKLG), and 116–141 (YHVPIAFSFAILAYVTLVVIRPILMG). (7R,8Z)-bacteriochlorophyll b is bound by residues H154 and H174. A helical membrane pass occupies residues 171–200 (NPAHMLAITFFFTTTLAMSMHGGLILSAAN). A Fe cation-binding site is contributed by H191. F217 contacts a ubiquinone. The chain crosses the membrane as a helical span at residues 226–252 (GSLGIHRLGLFLALSAAFWSAVCIVIS). H231 contributes to the Fe cation binding site.

It belongs to the reaction center PufL/M/PsbA/D family. In terms of assembly, reaction center is composed of four bacteriochlorophylls, two bacteriopheophytins, two ubiquinones, one iron, and three highly hydrophobic polypeptide chains (designated L, M, and H).

The protein localises to the cell inner membrane. Its function is as follows. The reaction center is a membrane-bound complex that mediates the initial photochemical event in the electron transfer process of photosynthesis. This is Reaction center protein L chain (pufL) from Rubrivivax gelatinosus (strain NBRC 100245 / IL144).